A 290-amino-acid chain; its full sequence is Bifunctional protein FolD (290 aa).

NADP(+)-binding positions include 165–167 (GRG), S194, and I235.

This sequence belongs to the tetrahydrofolate dehydrogenase/cyclohydrolase family. In terms of assembly, homodimer.

The enzyme catalyses (6R)-5,10-methylene-5,6,7,8-tetrahydrofolate + NADP(+) = (6R)-5,10-methenyltetrahydrofolate + NADPH. The catalysed reaction is (6R)-5,10-methenyltetrahydrofolate + H2O = (6R)-10-formyltetrahydrofolate + H(+). The protein operates within one-carbon metabolism; tetrahydrofolate interconversion. Functionally, catalyzes the oxidation of 5,10-methylenetetrahydrofolate to 5,10-methenyltetrahydrofolate and then the hydrolysis of 5,10-methenyltetrahydrofolate to 10-formyltetrahydrofolate. This is Bifunctional protein FolD from Syntrophotalea carbinolica (strain DSM 2380 / NBRC 103641 / GraBd1) (Pelobacter carbinolicus).